The following is a 117-amino-acid chain: Hainantoxin-XV (117 aa).

An N-terminal signal peptide occupies residues 1–20 (MKLCAVIIASLLVCVAVASS). The disordered stretch occupies residues 20-55 (SSDNQKEFAQEKEMTREETQSLGEHEKDDEVTGSEE). A propeptide spanning residues 21–56 (SDNQKEFAQEKEMTREETQSLGEHEKDDEVTGSEER) is cleaved from the precursor. Positions 23–55 (NQKEFAQEKEMTREETQSLGEHEKDDEVTGSEE) are enriched in basic and acidic residues. 4 cysteine pairs are disulfide-bonded: cysteine 58–cysteine 72, cysteine 65–cysteine 78, cysteine 69–cysteine 115, and cysteine 71–cysteine 91.

It belongs to the neurotoxin 03 (Tx2) family. 02 subfamily. HNTX-XV sub-subfamily. In terms of tissue distribution, expressed by the venom gland.

Its subcellular location is the secreted. Putative ion channel inhibitor. The chain is Hainantoxin-XV from Cyriopagopus hainanus (Chinese bird spider).